An 862-amino-acid polypeptide reads, in one-letter code: Semaphorin-4D (862 aa).

The N-terminal stretch at 1–21 is a signal peptide; that stretch reads MRMCTPIRGLLMALAVMFGTA. Positions 22 to 500 constitute a Sema domain; it reads MAFAPIPRIT…SNSGVVQAPL (479 aa). Topologically, residues 22 to 734 are extracellular; it reads MAFAPIPRIT…TMYLKSSDNR (713 aa). N-linked (GlcNAc...) asparagine glycosylation is found at Asn-49 and Asn-77. Disulfide bonds link Cys-97-Cys-108 and Cys-126-Cys-135. Asn-139 and Asn-191 each carry an N-linked (GlcNAc...) asparagine glycan. 2 disulfides stabilise this stretch: Cys-257–Cys-370 and Cys-281–Cys-326. Asn-329, Asn-379, and Asn-419 each carry an N-linked (GlcNAc...) asparagine glycan. The PSI domain maps to 502 to 551; the sequence is FCGKHGTCEDCVLARDPYCAWSPPTATCVALHQTESPSRGLIQEMSGDAS. Intrachain disulfides connect Cys-503–Cys-520, Cys-509–Cys-553, Cys-512–Cys-529, and Cys-576–Cys-624. Positions 554–636 constitute an Ig-like C2-type domain; that stretch reads PDKSKGSYRQ…EERVKNKTVF (83 aa). Asn-613 and Asn-632 each carry an N-linked (GlcNAc...) asparagine glycan. The chain crosses the membrane as a helical span at residues 735–755; that stretch reads LLMSLFLFFFVLFLCLFFYNC. Over 756 to 862 the chain is Cytoplasmic; it reads YKGYLPRQCL…KFADSDADGD (107 aa). The disordered stretch occupies residues 794–837; the sequence is VEPGSFSQQNGEHPKPALDTGYETEQDTITSKVPTDREDSQRID. Residues 827 to 837 show a composition bias toward basic and acidic residues; sequence PTDREDSQRID. Phosphoserine is present on Ser-833.

It belongs to the semaphorin family. In terms of assembly, homodimer. Interacts with PLXNB2. Interacts with PLXNB1. As to expression, strongly expressed in skeletal muscle, peripheral blood lymphocytes, spleen, and thymus and also expressed at lower levels in testes, brain, kidney, small intestine, prostate, heart, placenta, lung and pancreas, but not in colon and liver.

The protein resides in the cell membrane. Functionally, cell surface receptor for PLXNB1 and PLXNB2 that plays an important role in cell-cell signaling. Regulates GABAergic synapse development. Promotes the development of inhibitory synapses in a PLXNB1-dependent manner. Modulates the complexity and arborization of developing neurites in hippocampal neurons by activating PLXNB1 and interaction with PLXNB1 mediates activation of RHOA. Promotes the migration of cerebellar granule cells. Plays a role in the immune system; induces B-cells to aggregate and improves their viability (in vitro). Induces endothelial cell migration through the activation of PTK2B/PYK2, SRC, and the phosphatidylinositol 3-kinase-AKT pathway. This chain is Semaphorin-4D (SEMA4D), found in Homo sapiens (Human).